Here is a 92-residue protein sequence, read N- to C-terminus: RIIa domain-containing protein 1 (92 aa).

Positions 43-77 (KEVELLISGFFREMFLKRPDNIPEFAADYFTDPRL) constitute an RIIa domain.

In Bos taurus (Bovine), this protein is RIIa domain-containing protein 1 (RIIAD1).